Reading from the N-terminus, the 706-residue chain is Acyl-coenzyme A oxidase (706 aa).

Positions 682-706 (MLNRPSKEERERFEKSTETAKILSK) are disordered. The segment covering 686 to 699 (PSKEERERFEKSTE) has biased composition (basic and acidic residues).

It belongs to the acyl-CoA oxidase family. It depends on FAD as a cofactor.

It localises to the peroxisome. The enzyme catalyses a 2,3-saturated acyl-CoA + O2 = a (2E)-enoyl-CoA + H2O2. It functions in the pathway lipid metabolism; peroxisomal fatty acid beta-oxidation. The polypeptide is Acyl-coenzyme A oxidase (POX1) (Debaryomyces hansenii (strain ATCC 36239 / CBS 767 / BCRC 21394 / JCM 1990 / NBRC 0083 / IGC 2968) (Yeast)).